Consider the following 214-residue polypeptide: ATP phosphoribosyltransferase (214 aa).

It belongs to the ATP phosphoribosyltransferase family. Short subfamily. In terms of assembly, heteromultimer composed of HisG and HisZ subunits.

The protein resides in the cytoplasm. The catalysed reaction is 1-(5-phospho-beta-D-ribosyl)-ATP + diphosphate = 5-phospho-alpha-D-ribose 1-diphosphate + ATP. It participates in amino-acid biosynthesis; L-histidine biosynthesis; L-histidine from 5-phospho-alpha-D-ribose 1-diphosphate: step 1/9. Catalyzes the condensation of ATP and 5-phosphoribose 1-diphosphate to form N'-(5'-phosphoribosyl)-ATP (PR-ATP). Has a crucial role in the pathway because the rate of histidine biosynthesis seems to be controlled primarily by regulation of HisG enzymatic activity. This is ATP phosphoribosyltransferase from Lysinibacillus sphaericus (strain C3-41).